Reading from the N-terminus, the 373-residue chain is Chaperone protein DnaJ (373 aa).

A J domain is found at 4-69 (NYYEILEISQ…EKRSIYDRYG (66 aa)). A CR-type zinc finger spans residues 133-210 (GCKKKIDFSY…CHGNGYEEIK (78 aa)). Residues Cys146, Cys149, Cys162, Cys165, Cys184, Cys187, Cys198, and Cys201 each coordinate Zn(2+). 4 CXXCXGXG motif repeats span residues 146 to 153 (CKSCKGSG), 162 to 169 (CPHCGGKG), 184 to 191 (CDHCKGSG), and 198 to 205 (CKTCHGNG).

Belongs to the DnaJ family. In terms of assembly, homodimer. The cofactor is Zn(2+).

It localises to the cytoplasm. Functionally, participates actively in the response to hyperosmotic and heat shock by preventing the aggregation of stress-denatured proteins and by disaggregating proteins, also in an autonomous, DnaK-independent fashion. Unfolded proteins bind initially to DnaJ; upon interaction with the DnaJ-bound protein, DnaK hydrolyzes its bound ATP, resulting in the formation of a stable complex. GrpE releases ADP from DnaK; ATP binding to DnaK triggers the release of the substrate protein, thus completing the reaction cycle. Several rounds of ATP-dependent interactions between DnaJ, DnaK and GrpE are required for fully efficient folding. Also involved, together with DnaK and GrpE, in the DNA replication of plasmids through activation of initiation proteins. In Campylobacter lari (strain RM2100 / D67 / ATCC BAA-1060), this protein is Chaperone protein DnaJ.